The primary structure comprises 204 residues: Proteasome subunit beta type-3 (204 aa).

Belongs to the peptidase T1B family. The 26S proteasome consists of a 20S proteasome core and two 19S regulatory subunits. The 20S proteasome core is composed of 28 subunits that are arranged in four stacked rings, resulting in a barrel-shaped structure. The two end rings are each formed by seven alpha subunits, and the two central rings are each formed by seven beta subunits. The catalytic chamber with the active sites is on the inside of the barrel.

It localises to the cytoplasm. The protein localises to the nucleus. Functionally, non-catalytic component of the proteasome, a multicatalytic proteinase complex which is characterized by its ability to cleave peptides with Arg, Phe, Tyr, Leu, and Glu adjacent to the leaving group at neutral or slightly basic pH. The proteasome has an ATP-dependent proteolytic activity. This chain is Proteasome subunit beta type-3 (PBC1), found in Oryza sativa subsp. japonica (Rice).